Here is a 128-residue protein sequence, read N- to C-terminus: Large ribosomal subunit protein bL12 (128 aa).

Belongs to the bacterial ribosomal protein bL12 family. As to quaternary structure, homodimer. Part of the ribosomal stalk of the 50S ribosomal subunit. Forms a multimeric L10(L12)X complex, where L10 forms an elongated spine to which 2 to 4 L12 dimers bind in a sequential fashion. Binds GTP-bound translation factors.

Functionally, forms part of the ribosomal stalk which helps the ribosome interact with GTP-bound translation factors. Is thus essential for accurate translation. This Corynebacterium efficiens (strain DSM 44549 / YS-314 / AJ 12310 / JCM 11189 / NBRC 100395) protein is Large ribosomal subunit protein bL12.